A 91-amino-acid polypeptide reads, in one-letter code: DNA-directed RNA polymerase subunit omega (91 aa).

Belongs to the RNA polymerase subunit omega family. The RNAP catalytic core consists of 2 alpha, 1 beta, 1 beta' and 1 omega subunit. When a sigma factor is associated with the core the holoenzyme is formed, which can initiate transcription.

It carries out the reaction RNA(n) + a ribonucleoside 5'-triphosphate = RNA(n+1) + diphosphate. Promotes RNA polymerase assembly. Latches the N- and C-terminal regions of the beta' subunit thereby facilitating its interaction with the beta and alpha subunits. This is DNA-directed RNA polymerase subunit omega from Actinobacillus pleuropneumoniae serotype 5b (strain L20).